The chain runs to 166 residues: Regulatory protein RecX (166 aa).

It belongs to the RecX family.

It is found in the cytoplasm. Its function is as follows. Modulates RecA activity. This is Regulatory protein RecX from Salmonella paratyphi A (strain ATCC 9150 / SARB42).